A 485-amino-acid chain; its full sequence is E3 ubiquitin-protein ligase TRIM34A (485 aa).

The segment at 15–59 (CPVCQELLTKALSLGCGHRVCQACLITKKNAVINPREKSSCPVCG) adopts an RING-type zinc-finger fold. The B box-type zinc-finger motif lies at 91-132 (TKRDLCVHHGEKLLLFCKEDKKAICWVCERSQEHRGHHTFLW). Zn(2+) is bound by residues Cys96, His99, Cys118, and His124. Residues 136-170 (VRECQENLQKALTRLRKEQEKVETLEADIKEDRLS) adopt a coiled-coil conformation. One can recognise a B30.2/SPRY domain in the interval 282–485 (LSGMLQKFRE…APMTLCPLNS (204 aa)).

Belongs to the TRIM/RBCC family. Homotrimer. Interacts (via B-box and SPRY domain) with TRIM5.

It is found in the cytoplasm. It localises to the mitochondrion. It carries out the reaction S-ubiquitinyl-[E2 ubiquitin-conjugating enzyme]-L-cysteine + [acceptor protein]-L-lysine = [E2 ubiquitin-conjugating enzyme]-L-cysteine + N(6)-ubiquitinyl-[acceptor protein]-L-lysine.. Its pathway is protein modification; protein ubiquitination. Functions as antiviral protein and contributes to the defense against retroviral infections. Acts as a capsid-specific restriction factor with the help of TRIM5 and prevents infection from non-host-adapted retroviruses. During influenza A virus infection, promotes programmed cell death by targeting ZBP1 for 'Lys-63'-linked polyubiquitination. In turn, promotes ZBP1 recruitment of RIPK3 to mediate virus-induced programmed necrosis. Negatively regulates the function of mitochondria by enhancing mitochondrial depolarization leading to cytochrome c release and mitochondria-dependent apoptosis. Also promotes the formation of multinucleated giant cells by means of cell fusion and phagocytosis in epithelial cells. Plays an essential role in sustaining the integrity of the inner mucus layer in the colon by controlling the exocytosis of the major component of colonic mucus MUC2 from colonic goblet cells. The protein is E3 ubiquitin-protein ligase TRIM34A of Mus musculus (Mouse).